Here is a 319-residue protein sequence, read N- to C-terminus: Cell surface A33 antigen (319 aa).

Residues 1–21 form the signal peptide; sequence MLGKAGSVVWMLCAIWVAADA. In terms of domain architecture, Ig-like V-type spans 22 to 134; it reads LTVETTQDIL…QDVNAKSRVR (113 aa). Residues 22–235 lie on the Extracellular side of the membrane; the sequence is LTVETTQDIL…VAPRPPSMNI (214 aa). Cystine bridges form between Cys43–Cys117, Cys146–Cys222, and Cys162–Cys211. Asn99, Asn112, Asn200, and Asn223 each carry an N-linked (GlcNAc...) asparagine glycan. The Ig-like C2-type domain occupies 140-227; it reads PPSKPDCSIQ…GIESCNITVA (88 aa). The helical transmembrane segment at 236-256 threads the bilayer; that stretch reads ALYAGIAGGVFVALIIIGVIV. Over 257 to 319 the chain is Cytoplasmic; the sequence is YCCCCREKDD…GRSTPDQPFQ (63 aa). Composition is skewed to basic and acidic residues over residues 267 to 276 and 284 to 308; these read KDQDREDARP and PKKE…DRWS. Positions 267-319 are disordered; it reads KDQDREDARPNRAAYQVPKKEQKEISRGREDEDDHRHEDRWSSGRSTPDQPFQ. The span at 309–319 shows a compositional bias: polar residues; the sequence is SGRSTPDQPFQ.

Post-translationally, palmitoylated.

It is found in the membrane. Its function is as follows. May play a role in cell-cell recognition and signaling. The sequence is that of Cell surface A33 antigen (Gpa33) from Mus musculus (Mouse).